A 470-amino-acid polypeptide reads, in one-letter code: 3-isopropylmalate dehydratase large subunit (470 aa).

[4Fe-4S] cluster contacts are provided by cysteine 349, cysteine 409, and cysteine 412.

It belongs to the aconitase/IPM isomerase family. LeuC type 1 subfamily. Heterodimer of LeuC and LeuD. Requires [4Fe-4S] cluster as cofactor.

It carries out the reaction (2R,3S)-3-isopropylmalate = (2S)-2-isopropylmalate. The protein operates within amino-acid biosynthesis; L-leucine biosynthesis; L-leucine from 3-methyl-2-oxobutanoate: step 2/4. Catalyzes the isomerization between 2-isopropylmalate and 3-isopropylmalate, via the formation of 2-isopropylmaleate. This chain is 3-isopropylmalate dehydratase large subunit, found in Koribacter versatilis (strain Ellin345).